We begin with the raw amino-acid sequence, 493 residues long: E3 ubiquitin-protein ligase Hakai (493 aa).

Disordered stretches follow at residues 1 to 20 (MDHN…LGGL) and 28 to 61 (IKLI…GDEE). Residues 7 to 16 (DLQGTNSSAS) are compositionally biased toward polar residues. The segment at 109–149 (CDKCGLPIKMYGRMIPCKHVFCYDCAILHEKKGDKMCPGCN) adopts an RING-type zinc-finger fold. The HYB domain stretch occupies residues 148-206 (CNEPVQRIEQCVRGSLFMCSIVQGCKRTYLSQRDLQAHINHRHMRAGKPVTRPPLEPVH). The segment at 164 to 190 (FMCSIVQGCKRTYLSQRDLQAHINHRH) adopts a C2H2-type zinc-finger fold. The segment at 253–493 (YNQPHEDIRP…DQARYRPYYQ (241 aa)) is disordered. Pro residues-rich tracts occupy residues 262 to 276 (PPPA…PPRP), 342 to 352 (APPPPPPPPIS), 372 to 389 (APPP…PPPG), and 399 to 412 (MNHP…PQHG). A compositionally biased stretch (polar residues) spans 427 to 444 (NPNSLPQFSEDQGTLSPP). The segment covering 459–469 (PRGPPPPPRMQ) has biased composition (pro residues). Positions 470-480 (GPPAQAPLAGP) are enriched in low complexity.

The protein belongs to the Hakai family. As to quaternary structure, homodimer. Interacts with tyrosine-phosphorylated SRC substrates. Component of the WMM complex, a N6-methyltransferase complex composed of a catalytic subcomplex, named MAC, and of an associated subcomplex, named MACOM. Component of the MACOM subcomplex.

It localises to the nucleus speckle. The protein resides in the nucleus. The protein localises to the nucleoplasm. The enzyme catalyses S-ubiquitinyl-[E2 ubiquitin-conjugating enzyme]-L-cysteine + [acceptor protein]-L-lysine = [E2 ubiquitin-conjugating enzyme]-L-cysteine + N(6)-ubiquitinyl-[acceptor protein]-L-lysine.. It participates in protein modification; protein ubiquitination. Its function is as follows. E3 ubiquitin-protein ligase that mediates ubiquitination of several tyrosine-phosphorylated Src substrates. Associated component of the WMM complex, a complex that mediates N6-methyladenosine (m6A) methylation of RNAs, a modification that plays a role in the efficiency of mRNA splicing and RNA processing. The protein is E3 ubiquitin-protein ligase Hakai of Gallus gallus (Chicken).